Reading from the N-terminus, the 178-residue chain is Large ribosomal subunit protein uL6 (178 aa).

The protein belongs to the universal ribosomal protein uL6 family. As to quaternary structure, part of the 50S ribosomal subunit.

Functionally, this protein binds to the 23S rRNA, and is important in its secondary structure. It is located near the subunit interface in the base of the L7/L12 stalk, and near the tRNA binding site of the peptidyltransferase center. This is Large ribosomal subunit protein uL6 from Sulfurovum sp. (strain NBC37-1).